We begin with the raw amino-acid sequence, 156 residues long: Ribosome maturation factor RimP (156 aa).

The protein belongs to the RimP family.

The protein localises to the cytoplasm. Its function is as follows. Required for maturation of 30S ribosomal subunits. In Fusobacterium nucleatum subsp. nucleatum (strain ATCC 25586 / DSM 15643 / BCRC 10681 / CIP 101130 / JCM 8532 / KCTC 2640 / LMG 13131 / VPI 4355), this protein is Ribosome maturation factor RimP.